Here is a 498-residue protein sequence, read N- to C-terminus: DEAD-box ATP-dependent RNA helicase 12 (498 aa).

Positions 1 to 114 (MNTNRGRYPP…RLPPPDTRYQ (114 aa)) are disordered. The span at 27–65 (SYRQQQPPQDQQYVQRGYSQNPQQMQLQQQHQQQQQQQQ) shows a compositional bias: low complexity. Positions 74–96 (GNASNANEVVQQTTQPEASSDAN) are enriched in polar residues. Residues 124-152 (NEFEDYFLKRDLLKGIYEKGFEKPSPIQE) carry the Q motif motif. The 171-residue stretch at 155 to 325 (IPIALTGSDI…DRHLRKPYVI (171 aa)) folds into the Helicase ATP-binding domain. Residue 168 to 175 (AKNGTGKT) participates in ATP binding. A Phosphothreonine modification is found at threonine 230. The DEAD box motif lies at 273-276 (DEAD). The 161-residue stretch at 335-495 (GVTQYYAFVE…PIPSNIDQAI (161 aa)) folds into the Helicase C-terminal domain.

Belongs to the DEAD box helicase family. DDX6/DHH1 subfamily.

It localises to the cytoplasm. The protein localises to the P-body. The enzyme catalyses ATP + H2O = ADP + phosphate + H(+). ATP-dependent RNA helicase involved in mRNA turnover, and more specifically in mRNA decapping. In Arabidopsis thaliana (Mouse-ear cress), this protein is DEAD-box ATP-dependent RNA helicase 12 (RH12).